Consider the following 234-residue polypeptide: UPF0441 protein plu3956 (234 aa).

2 disordered regions span residues 105-129 and 149-234; these read QAGL…QQSG and SAPS…SVGG. Positions 110–127 are enriched in low complexity; sequence TTTSSTSTNGEAQAQQQQ. Polar residues predominate over residues 150–175; sequence APSQPLFSSKSATSPANGQFVDSTGK. Composition is skewed to low complexity over residues 188–205 and 216–234; these read TVPK…TTIT and QSTM…SVGG.

This sequence belongs to the UPF0441 family.

The protein is UPF0441 protein plu3956 of Photorhabdus laumondii subsp. laumondii (strain DSM 15139 / CIP 105565 / TT01) (Photorhabdus luminescens subsp. laumondii).